A 237-amino-acid polypeptide reads, in one-letter code: Phosphoribosylaminoimidazole-succinocarboxamide synthase (237 aa).

Belongs to the SAICAR synthetase family.

It carries out the reaction 5-amino-1-(5-phospho-D-ribosyl)imidazole-4-carboxylate + L-aspartate + ATP = (2S)-2-[5-amino-1-(5-phospho-beta-D-ribosyl)imidazole-4-carboxamido]succinate + ADP + phosphate + 2 H(+). Its pathway is purine metabolism; IMP biosynthesis via de novo pathway; 5-amino-1-(5-phospho-D-ribosyl)imidazole-4-carboxamide from 5-amino-1-(5-phospho-D-ribosyl)imidazole-4-carboxylate: step 1/2. This chain is Phosphoribosylaminoimidazole-succinocarboxamide synthase, found in Salmonella arizonae (strain ATCC BAA-731 / CDC346-86 / RSK2980).